Reading from the N-terminus, the 437-residue chain is Ribosomal protein uS12 methylthiotransferase RimO (437 aa).

The 112-residue stretch at 3-114 (ATIAVTHLGC…IVEVVERSRT (112 aa)) folds into the MTTase N-terminal domain. Residues Cys12, Cys48, Cys77, Cys152, Cys156, and Cys159 each coordinate [4Fe-4S] cluster. In terms of domain architecture, Radical SAM core spans 138–367 (TTTEAVAYLK…MRLQQTISQR (230 aa)). Residues 370–436 (ASQVGRVVPV…PYDLCGEVFQ (67 aa)) enclose the TRAM domain.

The protein belongs to the methylthiotransferase family. RimO subfamily. [4Fe-4S] cluster serves as cofactor.

The protein resides in the cytoplasm. The catalysed reaction is L-aspartate(89)-[ribosomal protein uS12]-hydrogen + (sulfur carrier)-SH + AH2 + 2 S-adenosyl-L-methionine = 3-methylsulfanyl-L-aspartate(89)-[ribosomal protein uS12]-hydrogen + (sulfur carrier)-H + 5'-deoxyadenosine + L-methionine + A + S-adenosyl-L-homocysteine + 2 H(+). Functionally, catalyzes the methylthiolation of an aspartic acid residue of ribosomal protein uS12. This is Ribosomal protein uS12 methylthiotransferase RimO from Gloeobacter violaceus (strain ATCC 29082 / PCC 7421).